The following is a 353-amino-acid chain: Adenine deaminase (353 aa).

Residues histidine 19, histidine 21, and histidine 208 each contribute to the Zn(2+) site. Glutamate 211 serves as the catalytic Proton donor. Zn(2+) is bound at residue aspartate 289. Aspartate 290 serves as a coordination point for substrate.

The protein belongs to the metallo-dependent hydrolases superfamily. Adenosine and AMP deaminases family. Adenine deaminase type 2 subfamily. Requires Zn(2+) as cofactor.

The protein localises to the cytoplasm. The protein resides in the nucleus. The enzyme catalyses adenine + H2O + H(+) = hypoxanthine + NH4(+). Its function is as follows. Catalyzes the hydrolytic deamination of adenine to hypoxanthine. Plays an important role in the purine salvage pathway and in nitrogen catabolism. This chain is Adenine deaminase, found in Gibberella zeae (strain ATCC MYA-4620 / CBS 123657 / FGSC 9075 / NRRL 31084 / PH-1) (Wheat head blight fungus).